The primary structure comprises 310 residues: MIIVTGGAGFIGSNIVKALNDIGYTDILVVDNLKDGTKFVNLVDLNIADYMDKEDFQVQIMSGEEFGEVEAVFHEGACSSTTEWDGKYMMDNNYQYSKELLHYCLEREIPFLYASSAATYGGRTSDFIESREYEKPLNVYGYSKFLFDEYVRQILPEANSQITGFRYFNVYGPREGHKGSMASVAFHLNTQLNNGESPKLFEGSENFKRDFIYVGDVAAVNLWFWQNGVSGIFNCGTGRAESFQAVADAALAFHKKGSIEYIPFPEKLKGRYQAFTQADLTNLRAAGYDKPFKTVAEGVAEYMAWLNRDA.

NADP(+) is bound by residues Phe10–Ile11, Asp31–Asn32, Lys38, Lys53, Glu75–Ser79, and Asn92. The active-site Proton acceptor is the Tyr140. Residue Lys144 coordinates NADP(+). Position 169 (Asn169) interacts with substrate. Residues Val170 and Lys178 each coordinate NADP(+). Residue Lys178 is the Proton acceptor of the active site. Residues Ser180, His187, Phe201–Ser204, Arg209, and Tyr272 each bind substrate.

This sequence belongs to the NAD(P)-dependent epimerase/dehydratase family. HldD subfamily. Homopentamer. Requires NADP(+) as cofactor.

The enzyme catalyses ADP-D-glycero-beta-D-manno-heptose = ADP-L-glycero-beta-D-manno-heptose. It functions in the pathway nucleotide-sugar biosynthesis; ADP-L-glycero-beta-D-manno-heptose biosynthesis; ADP-L-glycero-beta-D-manno-heptose from D-glycero-beta-D-manno-heptose 7-phosphate: step 4/4. In terms of biological role, catalyzes the interconversion between ADP-D-glycero-beta-D-manno-heptose and ADP-L-glycero-beta-D-manno-heptose via an epimerization at carbon 6 of the heptose. The sequence is that of ADP-L-glycero-D-manno-heptose-6-epimerase from Cronobacter sakazakii (strain ATCC BAA-894) (Enterobacter sakazakii).